The primary structure comprises 246 residues: Proteasome subunit alpha type-6 (246 aa).

The protein belongs to the peptidase T1A family. The 26S proteasome consists of a 20S proteasome core and two 19S regulatory subunits. The 20S proteasome core is composed of 28 subunits that are arranged in four stacked rings, resulting in a barrel-shaped structure. The two end rings are each formed by seven alpha subunits, and the two central rings are each formed by seven beta subunits. The catalytic chamber with the active sites is on the inside of the barrel.

It localises to the cytoplasm. The protein localises to the nucleus. Its function is as follows. The proteasome is a multicatalytic proteinase complex which is characterized by its ability to cleave peptides with Arg, Phe, Tyr, Leu, and Glu adjacent to the leaving group at neutral or slightly basic pH. The proteasome has an ATP-dependent proteolytic activity. The polypeptide is Proteasome subunit alpha type-6 (PAA1) (Nicotiana tabacum (Common tobacco)).